Here is a 356-residue protein sequence, read N- to C-terminus: Protein RecA (356 aa).

67-74 (GPESSGKT) provides a ligand contact to ATP.

Belongs to the RecA family.

The protein resides in the cytoplasm. In terms of biological role, can catalyze the hydrolysis of ATP in the presence of single-stranded DNA, the ATP-dependent uptake of single-stranded DNA by duplex DNA, and the ATP-dependent hybridization of homologous single-stranded DNAs. It interacts with LexA causing its activation and leading to its autocatalytic cleavage. The chain is Protein RecA from Yersinia pestis bv. Antiqua (strain Angola).